Consider the following 137-residue polypeptide: MMIIFRYLIIIILSVYMTGCTNNNLKKEDIPEDMFAIIYGSDSIKKYEHGQMELTKNINSGCIEALVFLSEEDPEKYSDYINDYHKIAEGYRFLDDNRTFMNKDSIELLVRGLNVKKDVLCSRVKFESFQHLKNKFQ.

This is an uncharacterized protein from Escherichia coli (strain K12).